A 354-amino-acid polypeptide reads, in one-letter code: Annexin A13 (354 aa).

Annexin repeat units follow at residues 26-97 (NDPN…MLLT), 98-177 (DTDK…ALLQ), 203-275 (NLVE…LTLN), and 279-350 (NRPK…ALIG). Positions 39, 41, 43, 44, 46, 83, 111, 113, 115, 118, 163, 265, 292, 294, 295, 296, and 336 each coordinate Ca(2+).

The protein belongs to the annexin family. In terms of assembly, homodimer.

Its subcellular location is the tegument. The protein resides in the secreted. The protein localises to the extracellular exosome. It is found in the host cell. Its function is as follows. Involved in reproduction of the worm. Involved in host-parasite interaction. Delivered into the host cell by means of parasite exosomes. Binds to acidic phospholipid membranes in a calcium-dependent manner in vitro. Causes aggregation of liposomes in the presence of calcium, but not in its absence. Likely to promote membrane fusion. May provide structural integrity within the tegument. The protein is Annexin A13 of Schistosoma japonicum (Blood fluke).